A 435-amino-acid polypeptide reads, in one-letter code: MTQTVNVIGAGLAGSEAAYQLAERGIKVNLIEMRPVKQTPAHHTDKFAELVCSNSLRGNALTNGVGVLKEEMRRLNSIIIEAADKARVPAGGALAVDRHDFSGYITETLKNHENITVINEEINAIPDGYTIIATGPLTTETLAQEIVDITGKDQLYFYDAAAPIIEKESIDMDKVYLKSRYDKGEAAYLNCPMTEDEFNRFYDAVLEAEVAPVNSFEKEKYFEGCMPFEVMAERGRKTLLFGPMKPVGLEDPKTGKRPYAVVQLRQDDAAGTLYNIVGFQTHLKWGAQKEVIKLIPGLENVDIVRYGVMHRNTFINSPDVLNEKYELISQPNIQFAGQMTGVEGYVESAASGLVAGINLAHKILGKGEVVFPRETMIGSMAYYISHAKNNKNFQPMNANFGLLPSLETRIKDKKERYEAQANRALDYLKNFKKTL.

Residue 9–14 (GAGLAG) participates in FAD binding.

The protein belongs to the MnmG family. TrmFO subfamily. Requires FAD as cofactor.

The protein localises to the cytoplasm. The enzyme catalyses uridine(54) in tRNA + (6R)-5,10-methylene-5,6,7,8-tetrahydrofolate + NADH + H(+) = 5-methyluridine(54) in tRNA + (6S)-5,6,7,8-tetrahydrofolate + NAD(+). The catalysed reaction is uridine(54) in tRNA + (6R)-5,10-methylene-5,6,7,8-tetrahydrofolate + NADPH + H(+) = 5-methyluridine(54) in tRNA + (6S)-5,6,7,8-tetrahydrofolate + NADP(+). Its function is as follows. Catalyzes the folate-dependent formation of 5-methyl-uridine at position 54 (M-5-U54) in all tRNAs. This is Methylenetetrahydrofolate--tRNA-(uracil-5-)-methyltransferase TrmFO from Staphylococcus aureus (strain JH1).